Here is a 381-residue protein sequence, read N- to C-terminus: E3 ubiquitin-protein ligase At1g63170 (381 aa).

The tract at residues 1 to 23 (MSRETTTEATPLILTDGGGGRRS) is disordered. 2 helical membrane-spanning segments follow: residues 74–94 (VVVL…AVLV) and 107–127 (VWII…CVEY). Positions 135–161 (RRDLSPRSSSSSSSSSSSMDEEEGLGL) are disordered. Residues 140 to 152 (PRSSSSSSSSSSS) show a composition bias toward low complexity. Residues 170-194 (LELGQLENENNSFAKHLESANTMIS) adopt a coiled-coil conformation. The next 3 membrane-spanning stretches (helical) occupy residues 189–209 (ANTM…SSGG), 224–244 (IVFL…ACVI), and 245–265 (GIAV…VAEQ). The segment at 325–366 (CCICLSAYEDETELRELPCGHHFHCGCVDKWLYINATCPLCK) adopts an RING-type; atypical zinc-finger fold.

The protein resides in the membrane. It carries out the reaction S-ubiquitinyl-[E2 ubiquitin-conjugating enzyme]-L-cysteine + [acceptor protein]-L-lysine = [E2 ubiquitin-conjugating enzyme]-L-cysteine + N(6)-ubiquitinyl-[acceptor protein]-L-lysine.. It participates in protein modification; protein ubiquitination. Functionally, mediates E2-dependent protein ubiquitination. The chain is E3 ubiquitin-protein ligase At1g63170 from Arabidopsis thaliana (Mouse-ear cress).